Consider the following 53-residue polypeptide: UPF0391 membrane protein Acid_3618 (53 aa).

The next 2 helical transmembrane spans lie at 6–26 (LVFL…LAGA) and 28–48 (VGIA…AFLM).

This sequence belongs to the UPF0391 family.

It is found in the cell membrane. The chain is UPF0391 membrane protein Acid_3618 from Solibacter usitatus (strain Ellin6076).